The sequence spans 338 residues: F420-dependent glucose-6-phosphate dehydrogenase (338 aa).

D40 lines the coenzyme F420-(gamma-Glu)n pocket. Residue H41 is the Proton donor of the active site. Coenzyme F420-(gamma-Glu)n contacts are provided by residues T77 and T108–G109. The Proton acceptor role is filled by E110. Coenzyme F420-(gamma-Glu)n is bound by residues N113, G178–G179, and V181–V182. The substrate site is built by T196, K199, K260, and R284.

The protein belongs to the F420-dependent glucose-6-phosphate dehydrogenase family. As to quaternary structure, homodimer.

The enzyme catalyses oxidized coenzyme F420-(gamma-L-Glu)(n) + D-glucose 6-phosphate + H(+) = 6-phospho-D-glucono-1,5-lactone + reduced coenzyme F420-(gamma-L-Glu)(n). In terms of biological role, catalyzes the coenzyme F420-dependent oxidation of glucose 6-phosphate (G6P) to 6-phosphogluconolactone. The sequence is that of F420-dependent glucose-6-phosphate dehydrogenase from Gordonia bronchialis (strain ATCC 25592 / DSM 43247 / BCRC 13721 / JCM 3198 / KCTC 3076 / NBRC 16047 / NCTC 10667) (Rhodococcus bronchialis).